We begin with the raw amino-acid sequence, 487 residues long: Protein nucleotidyltransferase YdiU (487 aa).

G90, G92, R93, K113, D125, G126, R176, and R183 together coordinate ATP. D252 (proton acceptor) is an active-site residue. Mg(2+)-binding residues include N253 and D262. D262 provides a ligand contact to ATP.

The protein belongs to the SELO family. The cofactor is Mg(2+). Mn(2+) serves as cofactor.

It carries out the reaction L-seryl-[protein] + ATP = 3-O-(5'-adenylyl)-L-seryl-[protein] + diphosphate. The enzyme catalyses L-threonyl-[protein] + ATP = 3-O-(5'-adenylyl)-L-threonyl-[protein] + diphosphate. The catalysed reaction is L-tyrosyl-[protein] + ATP = O-(5'-adenylyl)-L-tyrosyl-[protein] + diphosphate. It catalyses the reaction L-histidyl-[protein] + UTP = N(tele)-(5'-uridylyl)-L-histidyl-[protein] + diphosphate. It carries out the reaction L-seryl-[protein] + UTP = O-(5'-uridylyl)-L-seryl-[protein] + diphosphate. The enzyme catalyses L-tyrosyl-[protein] + UTP = O-(5'-uridylyl)-L-tyrosyl-[protein] + diphosphate. Nucleotidyltransferase involved in the post-translational modification of proteins. It can catalyze the addition of adenosine monophosphate (AMP) or uridine monophosphate (UMP) to a protein, resulting in modifications known as AMPylation and UMPylation. This chain is Protein nucleotidyltransferase YdiU, found in Pseudomonas savastanoi pv. phaseolicola (strain 1448A / Race 6) (Pseudomonas syringae pv. phaseolicola (strain 1448A / Race 6)).